A 131-amino-acid chain; its full sequence is Histone H2A-beta (131 aa).

N-acetylserine is present on serine 2. Lysine 5 and lysine 9 each carry N6-acetyllysine. Residue glutamine 106 is modified to N5-methylglutamine. At serine 128 the chain carries Phosphoserine. The [ST]-Q motif motif lies at 128 to 129 (SQ).

The protein belongs to the histone H2A family. The nucleosome is a histone octamer containing two molecules each of H2A, H2B, H3 and H4 assembled in one H3-H4 heterotetramer and two H2A-H2B heterodimers. The octamer wraps approximately 147 bp of DNA. Post-translationally, phosphorylated to form H2AS128ph (gamma-H2A) in response to DNA double-strand breaks (DSBs) generated by exogenous genotoxic agents and by stalled replication forks. Phosphorylation is dependent on the DNA damage checkpoint kinases rad3/ATR and tel1/ATM, spreads on either side of a detected DSB site and may mark the surrounding chromatin for recruitment of proteins required for DNA damage signaling and repair. Gamma-H2A is required for recruiting crb2, a modulator of DNA damage checkpoint signaling, to DSB sites. Gamma-H2A is removed from the DNA prior to the strand invasion-primer extension step of the repair process and subsequently dephosphorylated. Dephosphorylation is necessary for efficient recovery from the DNA damage checkpoint. In terms of processing, acetylated by esa1 to form H2AK4ac and H2AK7ac.

Its subcellular location is the nucleus. The protein localises to the chromosome. Functionally, core component of nucleosome which plays a central role in DNA double strand break (DSB) repair. Nucleosomes wrap and compact DNA into chromatin, limiting DNA accessibility to the cellular machineries which require DNA as a template. Histones thereby play a central role in transcription regulation, DNA repair, DNA replication and chromosomal stability. DNA accessibility is regulated via a complex set of post-translational modifications of histones, also called histone code, and nucleosome remodeling. In Schizosaccharomyces pombe (strain 972 / ATCC 24843) (Fission yeast), this protein is Histone H2A-beta (hta2).